The following is a 386-amino-acid chain: Succinate--CoA ligase [ADP-forming] subunit beta (386 aa).

An ATP-grasp domain is found at 9–244; that stretch reads KEILRSYGVS…LDEEDPKEVE (236 aa). ATP-binding positions include Lys46, 53–55, Glu99, Cys102, and Glu107; that span reads GRG. Mg(2+) contacts are provided by Asn199 and Asp213. Substrate-binding positions include Asn264 and 321 to 323; that span reads GIM.

Belongs to the succinate/malate CoA ligase beta subunit family. In terms of assembly, heterotetramer of two alpha and two beta subunits. Mg(2+) serves as cofactor.

The catalysed reaction is succinate + ATP + CoA = succinyl-CoA + ADP + phosphate. It carries out the reaction GTP + succinate + CoA = succinyl-CoA + GDP + phosphate. Its pathway is carbohydrate metabolism; tricarboxylic acid cycle; succinate from succinyl-CoA (ligase route): step 1/1. Its function is as follows. Succinyl-CoA synthetase functions in the citric acid cycle (TCA), coupling the hydrolysis of succinyl-CoA to the synthesis of either ATP or GTP and thus represents the only step of substrate-level phosphorylation in the TCA. The beta subunit provides nucleotide specificity of the enzyme and binds the substrate succinate, while the binding sites for coenzyme A and phosphate are found in the alpha subunit. The protein is Succinate--CoA ligase [ADP-forming] subunit beta of Geobacillus thermodenitrificans (strain NG80-2).